The chain runs to 132 residues: MVMTDPIADFLTRIRNANQAKHEVLEVPASNIKKGIADILKREGFVKNVEVIEDDKQGIIRVFLKYGQNGERVITNLKRISKPGLRVYTKHEDMPKVLNGLGIAIVSTSEGLLTDKEARQKNVGGEVLAYIW.

This sequence belongs to the universal ribosomal protein uS8 family. Part of the 30S ribosomal subunit. Contacts proteins S5 and S12.

One of the primary rRNA binding proteins, it binds directly to 16S rRNA central domain where it helps coordinate assembly of the platform of the 30S subunit. The sequence is that of Small ribosomal subunit protein uS8 from Streptococcus agalactiae serotype Ia (strain ATCC 27591 / A909 / CDC SS700).